A 338-amino-acid polypeptide reads, in one-letter code: tRNA N6-adenosine threonylcarbamoyltransferase (338 aa).

Residues His-111 and His-115 each contribute to the Fe cation site. Substrate is bound by residues 134 to 138, Asp-167, Gly-180, and Asn-272; that span reads LVSGG. A Fe cation-binding site is contributed by Asp-300.

Belongs to the KAE1 / TsaD family. Fe(2+) serves as cofactor.

The protein localises to the cytoplasm. It carries out the reaction L-threonylcarbamoyladenylate + adenosine(37) in tRNA = N(6)-L-threonylcarbamoyladenosine(37) in tRNA + AMP + H(+). In terms of biological role, required for the formation of a threonylcarbamoyl group on adenosine at position 37 (t(6)A37) in tRNAs that read codons beginning with adenine. Is involved in the transfer of the threonylcarbamoyl moiety of threonylcarbamoyl-AMP (TC-AMP) to the N6 group of A37, together with TsaE and TsaB. TsaD likely plays a direct catalytic role in this reaction. The chain is tRNA N6-adenosine threonylcarbamoyltransferase from Aliivibrio salmonicida (strain LFI1238) (Vibrio salmonicida (strain LFI1238)).